A 452-amino-acid polypeptide reads, in one-letter code: Mitochondrial import inner membrane translocase subunit TIM50 (452 aa).

The N-terminal 23 residues, 1 to 23, are a transit peptide targeting the mitochondrion; that stretch reads MSLSKLTQTCFSRHQAKTFIRLY. Residues 24–167 lie on the Mitochondrial matrix side of the membrane; sequence SSDFKSLLGP…RRKRMERNTR (144 aa). 2 disordered regions span residues 96 to 115 and 130 to 153; these read IEAEKVLSSPPPAPAPTSSA and ESAASKSSSSSGGSSDNSDPGNAE. Residues 131–144 are compositionally biased toward low complexity; sequence SAASKSSSSSGGSS. Residues 168-188 form a helical membrane-spanning segment; that stretch reads IGAYVLFGGSIIGFISFCFYY. Topologically, residues 189–452 are mitochondrial intermembrane; sequence GRAQRDEFGN…LFGSRRHVNA (264 aa). The region spanning 243 to 387 is the FCP1 homology domain; that stretch reads YLQPKYTIVI…VDLAELLKTI (145 aa).

The protein belongs to the TIM50 family.

It localises to the mitochondrion inner membrane. In terms of biological role, essential component of the TIM23 complex, a complex that mediates the translocation of transit peptide-containing proteins across the mitochondrial inner membrane. The chain is Mitochondrial import inner membrane translocase subunit TIM50 (scpl-4) from Caenorhabditis elegans.